A 211-amino-acid chain; its full sequence is Transcription factor bHLH150 (211 aa).

The span at 1–15 shows a compositional bias: polar residues; the sequence is MSSEQGNGSNPSTSP. Residues 1 to 23 are disordered; it reads MSSEQGNGSNPSTSPEVEGTKTI. Positions 135–184 constitute a bHLH domain; it reads AIRGSGGSGRRRKLSAVGNRVRVLGGLVPGCRRTALPELLDETADYIAAL.

As to quaternary structure, homodimer. Interacts with PRE3 and ASK7. In terms of processing, phosphorylated by ASK7.

It localises to the nucleus. Its function is as follows. Atypical bHLH transcription factor probably unable to bind DNA. Negatively regulates brassinosteroid signaling. This Arabidopsis thaliana (Mouse-ear cress) protein is Transcription factor bHLH150 (BHLH150).